Reading from the N-terminus, the 198-residue chain is Ribonuclease HII (198 aa).

An RNase H type-2 domain is found at 10-198 (QLVAGVDEVG…PVKRALGLAS (189 aa)). Asp-16, Glu-17, and Asp-108 together coordinate a divalent metal cation.

The protein belongs to the RNase HII family. The cofactor is Mn(2+). It depends on Mg(2+) as a cofactor.

The protein localises to the cytoplasm. It catalyses the reaction Endonucleolytic cleavage to 5'-phosphomonoester.. Its function is as follows. Endonuclease that specifically degrades the RNA of RNA-DNA hybrids. This is Ribonuclease HII from Shigella sonnei (strain Ss046).